The following is a 77-amino-acid chain: ATP synthase subunit 9, mitochondrial (77 aa).

A run of 2 helical transmembrane segments spans residues methionine 8–leucine 28 and leucine 45–phenylalanine 72.

Belongs to the ATPase C chain family. As to quaternary structure, F-type ATPases have 2 components, CF(1) - the catalytic core - and CF(0) - the membrane proton channel. CF(1) has five subunits: alpha(3), beta(3), gamma(1), delta(1), epsilon(1). CF(0) has three main subunits: a, b and c.

The protein resides in the mitochondrion membrane. In terms of biological role, this protein is one of the chains of the nonenzymatic membrane component (F0) of mitochondrial ATPase. The sequence is that of ATP synthase subunit 9, mitochondrial (ATP9) from Petunia sp. (Petunia).